The primary structure comprises 96 residues: Myticin-B (96 aa).

Residues 1 to 20 form the signal peptide; that stretch reads MKATMLLAVVVAVFVAGTEA. The propeptide at 61-96 is removed in mature form; sequence VKFPFGATQDAKSMNELEYTPIMKSMENLDNGMDML.

Post-translationally, contains four disulfide bonds. As to expression, hemocytes.

Its subcellular location is the secreted. Functionally, bacteriolytic activity against Gram-positive bacteria M.luteus, B.megaterium and A.viridans and Gram-negative bacteria E.coli D31. Possesses antifungal activity against F.oxysporum. The sequence is that of Myticin-B from Mytilus galloprovincialis (Mediterranean mussel).